We begin with the raw amino-acid sequence, 91 residues long: MNKNELVSAVAEKAGLTKSDAASAVDAVFDVVQAELKNKGDIRLAGFGSFTVSHRAATKGRNPSTGAEVDIPARNVPKFTPGKGLKDAVNG.

Residues 57 to 91 (ATKGRNPSTGAEVDIPARNVPKFTPGKGLKDAVNG) are disordered.

The protein belongs to the bacterial histone-like protein family.

In terms of biological role, histone-like DNA-binding protein which is capable of wrapping DNA to stabilize it, and thus to prevent its denaturation under extreme environmental conditions. Binds to nod promoters and induces DNA binding. In Rhizobium leguminosarum, this protein is DNA-binding protein HRL53.